Consider the following 186-residue polypeptide: Ribosome maturation factor RimP (186 aa).

Belongs to the RimP family.

Its subcellular location is the cytoplasm. Functionally, required for maturation of 30S ribosomal subunits. The sequence is that of Ribosome maturation factor RimP from Novosphingobium aromaticivorans (strain ATCC 700278 / DSM 12444 / CCUG 56034 / CIP 105152 / NBRC 16084 / F199).